We begin with the raw amino-acid sequence, 299 residues long: tRNA dimethylallyltransferase (299 aa).

Position 11–18 (11–18 (GPTAVGKT)) interacts with ATP. 13–18 (TAVGKT) lines the substrate pocket. Residues 36 to 39 (DSQQ) are interaction with substrate tRNA.

It belongs to the IPP transferase family. In terms of assembly, monomer. Mg(2+) serves as cofactor.

The catalysed reaction is adenosine(37) in tRNA + dimethylallyl diphosphate = N(6)-dimethylallyladenosine(37) in tRNA + diphosphate. Functionally, catalyzes the transfer of a dimethylallyl group onto the adenine at position 37 in tRNAs that read codons beginning with uridine, leading to the formation of N6-(dimethylallyl)adenosine (i(6)A). This is tRNA dimethylallyltransferase from Streptococcus pyogenes serotype M12 (strain MGAS2096).